Consider the following 794-residue polypeptide: Glutamine--tRNA ligase (794 aa).

Residues 192–217 (DNEKPKKKKEKPAKVEDKAAPVATSE) form a disordered region. Positions 277 to 287 (PEPNGYLHIGH) match the 'HIGH' region motif. Residues 278–280 (EPN) and 284–290 (HIGHAKA) contribute to the ATP site. The L-glutamine site is built by Asp-310 and Tyr-450. ATP-binding positions include Thr-469, 498–499 (RL), and 506–508 (MSK). Residues 505-509 (VMSKR) carry the 'KMSKS' region motif.

The protein belongs to the class-I aminoacyl-tRNA synthetase family.

The enzyme catalyses tRNA(Gln) + L-glutamine + ATP = L-glutaminyl-tRNA(Gln) + AMP + diphosphate. The polypeptide is Glutamine--tRNA ligase (Lupinus luteus (European yellow lupine)).